Here is a 379-residue protein sequence, read N- to C-terminus: C-C chemokine receptor type 7 (379 aa).

The N-terminal stretch at 1–24 (MDLGKPMKNVLVVALLVIFQVCLC) is a signal peptide. At 25–59 (QDEVTDNYIGDNTTVDYTLYESVCFKKDVRNFKAW) the chain is on the extracellular side. N-linked (GlcNAc...) asparagine glycosylation occurs at Asn-36. Residues 60–86 (FLPIMYSIICFVGLLGNGLVMLTYIYF) form a helical membrane-spanning segment. At 87-95 (KRLKTMTDT) the chain is on the cytoplasmic side. The helical transmembrane segment at 96 to 116 (YLLNLALADILFLLTLPFWAY) threads the bilayer. Residues 117–130 (SAAKSWVFGVHVCK) are Extracellular-facing. Cys-129 and Cys-210 form a disulfide bridge. The chain crosses the membrane as a helical span at residues 131 to 152 (LIFGIYKISFFSGMLLLLCISI). Topologically, residues 153-170 (DRYVAIVQAVSAHRHRAR) are cytoplasmic. A helical transmembrane segment spans residues 171–191 (VLLISKLSCLGIWMLAIVLST). The Extracellular segment spans residues 192–219 (PEVMYSGIQKSSSEQALRCSLVTEHVEA). The chain crosses the membrane as a helical span at residues 220-247 (LITIQVAQMVVGFLIPLMAMSFCYLVII). At 248 to 263 (RTLLQARNFERNKAIK) the chain is on the cytoplasmic side. The chain crosses the membrane as a helical span at residues 264–289 (VIIAVVVVFVAFQLPYNGVVLAHTVA). The Extracellular portion of the chain corresponds to 290–314 (NFNITSGTSCELSKQLNIAYDVTYS). Asn-292 carries N-linked (GlcNAc...) asparagine glycosylation. A helical transmembrane segment spans residues 315-332 (LACVRCCVNPFLYAFIGV). Over 333 to 379 (KFRSDLFKLFKDLGCLSQEQLRQWSFCRHTRRSSMSVEAETTTTFSP) the chain is Cytoplasmic.

This sequence belongs to the G-protein coupled receptor 1 family.

The protein localises to the cell membrane. In terms of biological role, receptor for the MIP-3-beta chemokine. This Bos taurus (Bovine) protein is C-C chemokine receptor type 7 (CCR7).